A 72-amino-acid polypeptide reads, in one-letter code: Rubredoxin in uptake hydrogenase operon (72 aa).

A Rubredoxin-like domain is found at 19 to 70; it reads DAVLECKICWHRYDPAVGDEVWQILAGTPFAALPAHWRCPQCDGDREQFMVV. The Fe cation site is built by C24, C27, C57, and C60.

It belongs to the rubredoxin family. Fe(3+) serves as cofactor.

Its function is as follows. Could be an electron transport intermediate in hydrogen oxidation. The sequence is that of Rubredoxin in uptake hydrogenase operon (hupR) from Azotobacter chroococcum mcd 1.